Here is a 442-residue protein sequence, read N- to C-terminus: MNLPKRIFIKTFGCQMNEYDSSRMLDMLQAAEGMQTTDNPEEADVILLNTCSVREKAQEKVFSHLGRFAPLKEKNPDLVIGVGGCVASQEGESIVARAPYVDVVFGPQTLHRLPDMIESKRRTGISQVDISFPEVEKFDHLPPPRVEGAAAFLSIMEGCSKYCTFCVVPYTRGDEVSRPFDDILTEAIQLAEQGVKEITLLGQNVNGYRSETADGEMADLALLIEYLAEIPEIERIRYTTSHPNEMTPALIDCYARIPKLVSHLHLPVQAGSDRVLMNMKRNYTVLQYKSIIRKLRAARPDICISSDFIVGFPGETEQDFEATMKLMRDVGFDFSFSFIYSPRPGTPASYLPDDCSPEEKQSRLSRLQALNEAQGKAISASMVGSIQRVLIESVSAKRADELAGRTDNNRIVNFPGDTALINQFVNVRITEALSHTLRGELV.

The MTTase N-terminal domain occupies 5-122; that stretch reads KRIFIKTFGC…LPDMIESKRR (118 aa). Positions 14, 51, 85, 159, 163, and 166 each coordinate [4Fe-4S] cluster. A Radical SAM core domain is found at 145–377; that stretch reads RVEGAAAFLS…QALNEAQGKA (233 aa). The TRAM domain maps to 380–442; the sequence is ASMVGSIQRV…LSHTLRGELV (63 aa).

This sequence belongs to the methylthiotransferase family. MiaB subfamily. In terms of assembly, monomer. It depends on [4Fe-4S] cluster as a cofactor.

Its subcellular location is the cytoplasm. It catalyses the reaction N(6)-dimethylallyladenosine(37) in tRNA + (sulfur carrier)-SH + AH2 + 2 S-adenosyl-L-methionine = 2-methylsulfanyl-N(6)-dimethylallyladenosine(37) in tRNA + (sulfur carrier)-H + 5'-deoxyadenosine + L-methionine + A + S-adenosyl-L-homocysteine + 2 H(+). Its function is as follows. Catalyzes the methylthiolation of N6-(dimethylallyl)adenosine (i(6)A), leading to the formation of 2-methylthio-N6-(dimethylallyl)adenosine (ms(2)i(6)A) at position 37 in tRNAs that read codons beginning with uridine. The protein is tRNA-2-methylthio-N(6)-dimethylallyladenosine synthase of Methylobacillus flagellatus (strain ATCC 51484 / DSM 6875 / VKM B-1610 / KT).